We begin with the raw amino-acid sequence, 88 residues long: Small ribosomal subunit protein uS17 (88 aa).

Belongs to the universal ribosomal protein uS17 family. As to quaternary structure, part of the 30S ribosomal subunit.

Functionally, one of the primary rRNA binding proteins, it binds specifically to the 5'-end of 16S ribosomal RNA. The polypeptide is Small ribosomal subunit protein uS17 (Xylella fastidiosa (strain M23)).